A 236-amino-acid chain; its full sequence is Uridylate kinase (236 aa).

12–15 (KISG) lines the ATP pocket. Positions 20–25 (GTNGYG) are involved in allosteric activation by GTP. A UMP-binding site is contributed by G54. ATP is bound by residues G55 and R59. UMP is bound by residues D72 and 133–140 (TGNPYFST). The ATP site is built by Y166 and D169.

This sequence belongs to the UMP kinase family. As to quaternary structure, homohexamer.

The protein localises to the cytoplasm. The enzyme catalyses UMP + ATP = UDP + ADP. Its pathway is pyrimidine metabolism; CTP biosynthesis via de novo pathway; UDP from UMP (UMPK route): step 1/1. Allosterically activated by GTP. Inhibited by UTP. In terms of biological role, catalyzes the reversible phosphorylation of UMP to UDP. The chain is Uridylate kinase from Clostridium acetobutylicum (strain ATCC 824 / DSM 792 / JCM 1419 / IAM 19013 / LMG 5710 / NBRC 13948 / NRRL B-527 / VKM B-1787 / 2291 / W).